The chain runs to 389 residues: MNFHEYQSKQLLAEYGIPVPSGKVAATPDEAVDVATSLGKGPWMVKAQIHAGGRGKAGGVKFCKTTDDVKAAAAKMLGTKMSTYQTAGVELPINLVLVTTAGEIVKELYLSILVDRGTKTITYIASSEGGVEIEQVAAETPELIHALNVDFVEGVQGYHGRDFGFKLGLNAKQAGQFASIMVNLYKLFNEKDLALVEINPLAILDDGNLYALDGKFDSDDNAAFRQKQLVAMRDKTQEDETEVTASELDINYVTMDGNIGCMVNGAGLAMATMDVIKLNGGEPANFLDVGGGANKQRVIEAFKLILSSDKVEGIFVNIFGGIVRCDMIAEGIIAAVKEVGVKVPVVVRLEGTNVEEGKQLLRDSGMAIIPADNINDGAKKVVEAVKNAA.

The 236-residue stretch at Lys9 to Thr244 folds into the ATP-grasp domain. ATP contacts are provided by residues Lys46, Gly53–Gly55, Gly102, and Glu107. Asn199 and Asp213 together coordinate Mg(2+). Residues Asn264 and Gly321–Val323 contribute to the substrate site.

The protein belongs to the succinate/malate CoA ligase beta subunit family. In terms of assembly, heterotetramer of two alpha and two beta subunits. It depends on Mg(2+) as a cofactor.

It carries out the reaction succinate + ATP + CoA = succinyl-CoA + ADP + phosphate. The enzyme catalyses GTP + succinate + CoA = succinyl-CoA + GDP + phosphate. It participates in carbohydrate metabolism; tricarboxylic acid cycle; succinate from succinyl-CoA (ligase route): step 1/1. Its function is as follows. Succinyl-CoA synthetase functions in the citric acid cycle (TCA), coupling the hydrolysis of succinyl-CoA to the synthesis of either ATP or GTP and thus represents the only step of substrate-level phosphorylation in the TCA. The beta subunit provides nucleotide specificity of the enzyme and binds the substrate succinate, while the binding sites for coenzyme A and phosphate are found in the alpha subunit. This chain is Succinate--CoA ligase [ADP-forming] subunit beta, found in Xanthomonas oryzae pv. oryzae (strain MAFF 311018).